We begin with the raw amino-acid sequence, 426 residues long: L-ascorbate peroxidase T, chloroplastic (426 aa).

Residue His-112 is the Proton acceptor of the active site. His-241 serves as a coordination point for heme b. Thr-242 contacts K(+). The interval 245-269 is disordered; the sequence is RARPDRSGWGKPETKYTKTGPGEAG. A compositionally biased stretch (basic and acidic residues) spans 246-260; the sequence is ARPDRSGWGKPETKY. K(+)-binding residues include Thr-274 and Asp-281. Residues 397 to 417 traverse the membrane as a helical segment; the sequence is YFLNIIIAIGVLVLLSTLFGG.

The protein belongs to the peroxidase family. Ascorbate peroxidase subfamily. The cofactor is heme b.

It is found in the plastid. The protein localises to the chloroplast thylakoid membrane. It carries out the reaction L-ascorbate + H2O2 = L-dehydroascorbate + 2 H2O. Its function is as follows. Plays a key role in hydrogen peroxide removal. This is L-ascorbate peroxidase T, chloroplastic (APXT) from Arabidopsis thaliana (Mouse-ear cress).